We begin with the raw amino-acid sequence, 558 residues long: SPATS2-like protein (558 aa).

Ala2 carries the post-translational modification N-acetylalanine. Residues 63-79 (GKKKNNKRKRSKSKQHQ) show a composition bias toward basic residues. Disordered regions lie at residues 63–134 (GKKK…EKKI) and 157–201 (KLSL…KSNT). The span at 80-92 (GNKDAKDKVERPE) shows a compositional bias: basic and acidic residues. Ser120 carries the phosphoserine modification. A coiled-coil region spans residues 271 to 344 (LMAEMDKVKE…ARFSCDIEQL (74 aa)). Residues 380–525 (TSGKQSNFSR…DTSEARPFRG (146 aa)) are disordered. Polar residues-rich tracts occupy residues 381 to 390 (SGKQSNFSRK), 410 to 432 (SLPSTADPSHQTMPANKQNGSSN), and 440 to 456 (QYHNNRLNGPAKSQGSG). At Ser455 the chain carries Phosphoserine. Basic residues predominate over residues 469–485 (HEHRRQPHNGFRPKNKG). Residues 513–522 (HAADTSEARP) show a composition bias toward basic and acidic residues.

This sequence belongs to the SPATS2 family.

The protein localises to the cytoplasm. Its subcellular location is the nucleus. The protein resides in the nucleolus. This Homo sapiens (Human) protein is SPATS2-like protein (SPATS2L).